Reading from the N-terminus, the 244-residue chain is 5'-nucleotidase SurE (244 aa).

The a divalent metal cation site is built by Asp-8, Asp-9, Ser-39, and Asn-96.

It belongs to the SurE nucleotidase family. A divalent metal cation serves as cofactor.

It is found in the cytoplasm. The catalysed reaction is a ribonucleoside 5'-phosphate + H2O = a ribonucleoside + phosphate. Its function is as follows. Nucleotidase that shows phosphatase activity on nucleoside 5'-monophosphates. The sequence is that of 5'-nucleotidase SurE from Thermus thermophilus (strain ATCC 27634 / DSM 579 / HB8).